Reading from the N-terminus, the 440-residue chain is Putative postmeiotic segregation increased 2-like protein 1 (440 aa).

A compositionally biased stretch (basic and acidic residues) spans 164-178 (RVEHNVESSRWEPRR). Residues 164-215 (RVEHNVESSRWEPRRRGACGSRGGNFPSPRGGSGVASLERAESSSTEPAKAI) are disordered. The region spanning 230–364 (PVVPSLSTAV…MTVSVKQLFS (135 aa)) is the Histidine kinase domain.

Belongs to the DNA mismatch repair MutL/HexB family. In terms of tissue distribution, highly expressed in kidney, spleen, adrenal gland, ovary and cerebellum and to a lower extent in liver, esophagus, stomach, duodenum, colon, bladder, uterus, lung, pancreas and cerebrum. Not expressed in heart.

The chain is Putative postmeiotic segregation increased 2-like protein 1 (PMS2P1) from Homo sapiens (Human).